Consider the following 638-residue polypeptide: Sodium- and chloride-dependent glycine transporter 1 (638 aa).

The tract at residues M1–L30 is disordered. Over M1–E40 the chain is Cytoplasmic. A run of 3 helical transmembrane segments spans residues F41–L61, G68–M88, and V120–F140. Over S141–E217 the chain is Extracellular. 4 N-linked (GlcNAc...) asparagine glycosylation sites follow: N169, N172, N182, and N188. A run of 9 helical transmembrane segments spans residues V218 to I238, V247 to V267, V292 to I312, S339 to V359, L382 to L402, V438 to L458, Y462 to I482, L502 to F522, and V542 to F562. Residues Q563 to I638 are Cytoplasmic-facing. T603 carries the phosphothreonine modification. S605 and S630 each carry phosphoserine. The tract at residues S627–I638 is essential for interaction with EXOC1.

Belongs to the sodium:neurotransmitter symporter (SNF) (TC 2.A.22) family. SLC6A9 subfamily. Interacts with EXOC1; interaction increases the transporter capacity of SLC6A9 probably by promoting its insertion into the cell membrane. Interacts with EXOC3 and EXOC4. As to expression, found only in the white matter of the CNS. In terms of tissue distribution, found in the gray matter of CNS as well as in macrophages and mast cells in peripheral tissues.

The protein localises to the cell membrane. It carries out the reaction glycine(out) + chloride(out) + 2 Na(+)(out) = glycine(in) + chloride(in) + 2 Na(+)(in). Inhibited by sarcosine. In terms of biological role, sodium- and chloride-dependent glycine transporter. Essential for regulating glycine concentrations at inhibitory glycinergic synapses. The sequence is that of Sodium- and chloride-dependent glycine transporter 1 (Slc6a9) from Rattus norvegicus (Rat).